We begin with the raw amino-acid sequence, 172 residues long: Envelope protein UL45 (172 aa).

Topologically, residues 1 to 27 (MPLRASEHAYRPLGPGTPPVRARLPAA) are intravirion. Residues 28 to 48 (AWVGVGTIIGGVVIIAALVLV) form a helical; Signal-anchor for type II membrane protein membrane-spanning segment. Residues 49–172 (PSRASWALSP…TSTRNALGLP (124 aa)) lie on the Virion surface side of the membrane.

It belongs to the herpesviridae HHV-1 UL45 family.

Its subcellular location is the virion membrane. Its function is as follows. Important virulence factor of HSV neurotropism. Seems to be required for glycoprotein B-induced fusion. Dispensable for growth in vitro. The polypeptide is Envelope protein UL45 (Homo sapiens (Human)).